The chain runs to 98 residues: NADH-ubiquinone oxidoreductase chain 4L (98 aa).

Helical transmembrane passes span 1–21 (MPII…GMLT), 29–49 (SLLC…LMAL), and 58–78 (IVPI…LSLL).

Belongs to the complex I subunit 4L family. As to quaternary structure, core subunit of respiratory chain NADH dehydrogenase (Complex I) which is composed of 45 different subunits.

It localises to the mitochondrion inner membrane. The catalysed reaction is a ubiquinone + NADH + 5 H(+)(in) = a ubiquinol + NAD(+) + 4 H(+)(out). Core subunit of the mitochondrial membrane respiratory chain NADH dehydrogenase (Complex I) which catalyzes electron transfer from NADH through the respiratory chain, using ubiquinone as an electron acceptor. Part of the enzyme membrane arm which is embedded in the lipid bilayer and involved in proton translocation. The sequence is that of NADH-ubiquinone oxidoreductase chain 4L (MT-ND4L) from Presbytis melalophos (Mitred leaf monkey).